Consider the following 763-residue polypeptide: Ras and Rab interactor 1 (763 aa).

The residue at position 1 (Met-1) is an N-acetylmethionine. Residues 1–52 (MEDPGETGAHPLGATNLNFVPGHQQKEKPSTDPLYDTPDTRGVQAGGSQQPA) are disordered. At Tyr-35 the chain carries Phosphotyrosine; by ABL1 and ABL2. One can recognise an SH2 domain in the interval 68–151 (WLQLRANAAA…QLICGYCRTR (84 aa)). Disordered regions lie at residues 177-200 (LNTKDQQRPSEAPPIPRLKARSPQ), 238-273 (STETSSPLSPPAVPPPPVPVLPGTSSSQTERLPPRQ), and 301-331 (QEVDCCSPSSSEEEGSSGSPTTSPRLSRPRH). Phosphoserine is present on residues Ser-198, Ser-246, Ser-319, and Ser-323. The span at 245–257 (LSPPAVPPPPVPV) shows a compositional bias: pro residues. Positions 316–326 (SSGSPTTSPRL) are enriched in low complexity. Ser-340 carries the post-translational modification Phosphoserine; by PKD/PRKD1. The 143-residue stretch at 445 to 587 (LSADGSLGRL…LSGLSQARAL (143 aa)) folds into the VPS9 domain. Ser-598 is modified (phosphoserine). In terms of domain architecture, Ras-associating spans 613–695 (FQHLLRVAYQ…GYLIYRRAER (83 aa)). The residue at position 681 (Arg-681) is an Omega-N-methylarginine. The tract at residues 698-763 (TQGAVAEKAK…KAEGSQALEE (66 aa)) is disordered. The segment covering 727 to 755 (REGKPRIAVDQEGKDQARGGHIGPEEQKA) has biased composition (basic and acidic residues).

This sequence belongs to the RIN (Ras interaction/interference) family. In terms of assembly, interacts with the GTP-bound form of Ras proteins (NRAS, HRAS and KRAS). This interaction prevents the association between RAF1 and Ras. Interacts with 14-3-3 proteins YWHAB, YWHAE and YWHAZ when phosphorylated on Ser-340. Interacts with the SH3 domain of ABL1 and ABL2. Interacts with RAB5A. The interaction with Ras is probably regulated and antagonized by the interaction with 14-3-3 proteins. The interaction with 14-3-3 proteins is regulated by phosphorylation on Ser-340. Post-translationally, phosphorylated on tyrosine residues by ABL1 and ABL2. Phosphorylation at Ser-340 by PRKD1 induces interaction with 14-3-3 proteins. As to expression, highly expressed in brain. Weakly or no expressed in other tissues, except in testis, where it is expressed at intermediate level. In brain, it is mainly expressed in postnatal forebrain neurons in which it is localized in dendrites and colocalizes with Ras.

The protein resides in the cytoplasm. The protein localises to the membrane. Its subcellular location is the cytoskeleton. Functionally, ras effector protein, which may serve as an inhibitory modulator of neuronal plasticity in aversive memory formation. Can affect Ras signaling at different levels. First, by competing with RAF1 protein for binding to activated Ras. Second, by enhancing signaling from ABL1 and ABL2, which regulate cytoskeletal remodeling. Third, by activating RAB5A, possibly by functioning as a guanine nucleotide exchange factor (GEF) for RAB5A, by exchanging bound GDP for free GTP, and facilitating Ras-activated receptor endocytosis. This Mus musculus (Mouse) protein is Ras and Rab interactor 1 (Rin1).